Reading from the N-terminus, the 286-residue chain is Phosphatidylglycerol--prolipoprotein diacylglyceryl transferase (286 aa).

A run of 7 helical transmembrane segments spans residues 24-44 (IGPL…LFAW), 72-92 (FIVW…VLFY), 104-124 (IFAV…VILA), 140-160 (FDVV…ANFI), 190-210 (LYEA…LTHS), 218-238 (RFVG…VEFF), and 253-273 (WLTM…WAMA). An a 1,2-diacyl-sn-glycero-3-phospho-(1'-sn-glycerol)-binding site is contributed by Arg155.

This sequence belongs to the Lgt family.

It localises to the cell inner membrane. It carries out the reaction L-cysteinyl-[prolipoprotein] + a 1,2-diacyl-sn-glycero-3-phospho-(1'-sn-glycerol) = an S-1,2-diacyl-sn-glyceryl-L-cysteinyl-[prolipoprotein] + sn-glycerol 1-phosphate + H(+). It functions in the pathway protein modification; lipoprotein biosynthesis (diacylglyceryl transfer). Functionally, catalyzes the transfer of the diacylglyceryl group from phosphatidylglycerol to the sulfhydryl group of the N-terminal cysteine of a prolipoprotein, the first step in the formation of mature lipoproteins. This Mesorhizobium japonicum (strain LMG 29417 / CECT 9101 / MAFF 303099) (Mesorhizobium loti (strain MAFF 303099)) protein is Phosphatidylglycerol--prolipoprotein diacylglyceryl transferase.